A 175-amino-acid chain; its full sequence is Protein-export protein SecB (175 aa).

Belongs to the SecB family. Homotetramer, a dimer of dimers. One homotetramer interacts with 1 SecA dimer.

It is found in the cytoplasm. One of the proteins required for the normal export of preproteins out of the cell cytoplasm. It is a molecular chaperone that binds to a subset of precursor proteins, maintaining them in a translocation-competent state. It also specifically binds to its receptor SecA. The polypeptide is Protein-export protein SecB (Ehrlichia chaffeensis (strain ATCC CRL-10679 / Arkansas)).